A 460-amino-acid polypeptide reads, in one-letter code: Nuclear distribution protein PAC1 (460 aa).

The region spanning 9–41 (QAEELHKSIIAYLAANNLQDSANAMRTELGLGE) is the LisH domain. A coiled-coil region spans residues 61-88 (TSVVRLQKKIMDLEAQTQTLQTELNSAT). A compositionally biased stretch (polar residues) spans 82 to 92 (TELNSATPTSN). Positions 82–105 (TELNSATPTSNRRGDPSSWLPAGP) are disordered. WD repeat units follow at residues 112–153 (SHRT…RTVK), 155–195 (HTKA…QNIR), 199–246 (GHDH…CVKT), 249–288 (GHAD…PEAK), 293–354 (GHEH…KTLI), 355–394 (GHDN…KCVK), and 399–456 (SHEH…MSLR). A disordered region spans residues 414–433 (IKDKGPGEETNGDVGTPKKA).

The protein belongs to the WD repeat LIS1/nudF family. In terms of assembly, self-associates. Interacts with NDL1 and dynein.

It localises to the cytoplasm. Its subcellular location is the cytoskeleton. The protein localises to the spindle pole. In terms of biological role, positively regulates the activity of the minus-end directed microtubule motor protein dynein. May enhance dynein-mediated microtubule sliding by targeting dynein to the microtubule plus end. Required for nuclear migration during vegetative growth as well as development. Required for retrograde early endosome (EE) transport from the hyphal tip. Required for localization of dynein to the mitotic spindle poles. Recruits additional proteins to the dynein complex at SPBs. The polypeptide is Nuclear distribution protein PAC1 (Gibberella zeae (strain ATCC MYA-4620 / CBS 123657 / FGSC 9075 / NRRL 31084 / PH-1) (Wheat head blight fungus)).